A 275-amino-acid chain; its full sequence is Large ribosomal subunit protein uL2 (275 aa).

Disordered stretches follow at residues 1–24 (MGIR…FSEI) and 208–275 (AGRT…RRRR). The span at 12 to 22 (GTRQATVSDFS) shows a compositional bias: polar residues. 2 stretches are compositionally biased toward basic residues: residues 208–219 (AGRTRHLGRRPQ) and 255–275 (LGKK…RRRR).

Belongs to the universal ribosomal protein uL2 family. As to quaternary structure, part of the 50S ribosomal subunit. Forms a bridge to the 30S subunit in the 70S ribosome.

Its function is as follows. One of the primary rRNA binding proteins. Required for association of the 30S and 50S subunits to form the 70S ribosome, for tRNA binding and peptide bond formation. It has been suggested to have peptidyltransferase activity; this is somewhat controversial. Makes several contacts with the 16S rRNA in the 70S ribosome. This Picosynechococcus sp. (strain ATCC 27264 / PCC 7002 / PR-6) (Agmenellum quadruplicatum) protein is Large ribosomal subunit protein uL2.